Reading from the N-terminus, the 660-residue chain is Bifunctional polymyxin resistance protein ArnA (660 aa).

The tract at residues 1-304 is formyltransferase ArnAFT; it reads MKTVVFAYHD…TLGLVQGSRL (304 aa). (6R)-10-formyltetrahydrofolate is bound at residue 86 to 88; sequence HLI. The active-site Proton donor; for formyltransferase activity is His104. (6R)-10-formyltetrahydrofolate contacts are provided by residues Arg114 and 136 to 140; that span reads VTRAD. Residues 314 to 660 form a dehydrogenase ArnADH region; the sequence is RRTRVLILGV…RTVDLTDKPS (347 aa). NAD(+) is bound by residues Asp347 and 368–369; that span reads DI. UDP-alpha-D-glucuronate contacts are provided by residues Ala393, Tyr398, and 432 to 433; that span reads TS. Catalysis depends on Glu434, which acts as the Proton acceptor; for decarboxylase activity. Residues Arg460, Asn492, 526–535, and Tyr613 each bind UDP-alpha-D-glucuronate; that span reads KLIDGGKQKR. Arg619 acts as the Proton donor; for decarboxylase activity in catalysis.

It in the N-terminal section; belongs to the Fmt family. UDP-L-Ara4N formyltransferase subfamily. This sequence in the C-terminal section; belongs to the NAD(P)-dependent epimerase/dehydratase family. UDP-glucuronic acid decarboxylase subfamily. Homohexamer, formed by a dimer of trimers.

It carries out the reaction UDP-alpha-D-glucuronate + NAD(+) = UDP-beta-L-threo-pentopyranos-4-ulose + CO2 + NADH. The enzyme catalyses UDP-4-amino-4-deoxy-beta-L-arabinose + (6R)-10-formyltetrahydrofolate = UDP-4-deoxy-4-formamido-beta-L-arabinose + (6S)-5,6,7,8-tetrahydrofolate + H(+). It functions in the pathway nucleotide-sugar biosynthesis; UDP-4-deoxy-4-formamido-beta-L-arabinose biosynthesis; UDP-4-deoxy-4-formamido-beta-L-arabinose from UDP-alpha-D-glucuronate: step 1/3. Its pathway is nucleotide-sugar biosynthesis; UDP-4-deoxy-4-formamido-beta-L-arabinose biosynthesis; UDP-4-deoxy-4-formamido-beta-L-arabinose from UDP-alpha-D-glucuronate: step 3/3. The protein operates within bacterial outer membrane biogenesis; lipopolysaccharide biosynthesis. Its function is as follows. Bifunctional enzyme that catalyzes the oxidative decarboxylation of UDP-glucuronic acid (UDP-GlcUA) to UDP-4-keto-arabinose (UDP-Ara4O) and the addition of a formyl group to UDP-4-amino-4-deoxy-L-arabinose (UDP-L-Ara4N) to form UDP-L-4-formamido-arabinose (UDP-L-Ara4FN). The modified arabinose is attached to lipid A and is required for resistance to polymyxin and cationic antimicrobial peptides. This Shigella dysenteriae serotype 1 (strain Sd197) protein is Bifunctional polymyxin resistance protein ArnA.